The primary structure comprises 319 residues: MVHHKVTIIGSGPAAHTAAIYLARAEIKPTLYEGMFANGVAAGGQLTTTTEIENFPGFPDGLTGSDLMERMKAQSVKFGTEVVTETVAKVDLSARPFKLWTEFNEDEEPTTTDAIILATGASAKRLGLPGEETYWQRGISACAVCDGAVPIFRNKPLAVVGGGDSACEEASFLTKYGSKVFMLVRKDHMRASTIMQRRVERNEKIEVLYNTAPVEAKGDGSLLDALRVRDTRTGEESDLPVNGLFYAIGHTPATQLVAGQVDLDESGYVKTVPGSTLTNVPGLFAAGDVQDSRYRQAVTSAGSGCMAALDAEKFLSELE.

Residues serine 11–alanine 14, valine 40–alanine 41, glutamine 45, asparagine 54, valine 87, cysteine 145, aspartate 288, and arginine 295–alanine 297 contribute to the FAD site. Cysteine 142 and cysteine 145 are joined by a disulfide.

The protein belongs to the class-II pyridine nucleotide-disulfide oxidoreductase family. Homodimer. It depends on FAD as a cofactor.

It localises to the cytoplasm. It catalyses the reaction [thioredoxin]-dithiol + NADP(+) = [thioredoxin]-disulfide + NADPH + H(+). This chain is Thioredoxin reductase (TRR1), found in Eremothecium gossypii (strain ATCC 10895 / CBS 109.51 / FGSC 9923 / NRRL Y-1056) (Yeast).